A 309-amino-acid chain; its full sequence is Glutaminase (309 aa).

Residues S65, N117, E162, N169, Y193, Y245, and V263 each coordinate substrate.

This sequence belongs to the glutaminase family. As to quaternary structure, homotetramer.

The catalysed reaction is L-glutamine + H2O = L-glutamate + NH4(+). In Bacillus mycoides (strain KBAB4) (Bacillus weihenstephanensis), this protein is Glutaminase.